Reading from the N-terminus, the 91-residue chain is Elongation factor 1-beta (91 aa).

Belongs to the EF-1-beta/EF-1-delta family.

Its function is as follows. Promotes the exchange of GDP for GTP in EF-1-alpha/GDP, thus allowing the regeneration of EF-1-alpha/GTP that could then be used to form the ternary complex EF-1-alpha/GTP/AAtRNA. This Thermococcus onnurineus (strain NA1) protein is Elongation factor 1-beta.